A 329-amino-acid polypeptide reads, in one-letter code: Catabolite control protein A (329 aa).

Positions 1 to 57 constitute an HTH lacI-type domain; it reads MTVTIYDVAREARVSMATVSRVVNGNQNVKPETRNKVNEVIKRLNYRPNAVARGLAS. Positions 5–24 form a DNA-binding region, H-T-H motif; that stretch reads IYDVAREARVSMATVSRVVN.

Its function is as follows. Global transcriptional regulator of carbon catabolite repression (CCR) and carbon catabolite activation (CCA), which ensures optimal energy usage under diverse conditions. The protein is Catabolite control protein A (ccpA) of Staphylococcus epidermidis (strain ATCC 12228 / FDA PCI 1200).